Consider the following 395-residue polypeptide: Protein PIN-LIKES 7 (395 aa).

Residues 1–8 (MGFLELLE) are Lumenal-facing. A helical membrane pass occupies residues 9–29 (VASMPIVQVLLISVLGAFLAT). The Cytoplasmic portion of the chain corresponds to 30–45 (DYCSLLSADTRRSVNK). The chain crosses the membrane as a helical span at residues 46–66 (LVFVVFTPCIMFANLAETVTL). At 67–73 (QDIISWW) the chain is on the lumenal side. The chain crosses the membrane as a helical span at residues 74 to 94 (FMPINVGITFLVGGILGWLVV). Residues 95–106 (KLLNPKPQLHGL) are Cytoplasmic-facing. Residues 107–127 (IIATCASGNMGNLMLILVPAI) traverse the membrane as a helical segment. Topologically, residues 128–142 (CDEEGSPFGNRSVCR) are lumenal. A helical membrane pass occupies residues 143 to 163 (SIGLSYASFSMALGGFYIWTY). The Cytoplasmic segment spans residues 164–232 (SYQLVRSSAT…KDLLHQILEE (69 aa)). The helical transmembrane segment at 233–253 (LFAPPTIGAILGFVFGATNWL) threads the bilayer. Over 254–272 (RNLIIGENAPLRVIQDSVK) the chain is Lumenal. Residues 273–293 (LLGEGTIPCITLILGGNLIQG) traverse the membrane as a helical segment. The Cytoplasmic segment spans residues 294–302 (LRSSAVKKS). The helical transmembrane segment at 303 to 323 (VIVGVIIVRYILLPVVGVGVV) threads the bilayer. Topologically, residues 324-340 (QLAGNLGYLPPDPLFRY) are lumenal. A helical membrane pass occupies residues 341–361 (VLMLQFALPPAMNISTMAQLF). The Cytoplasmic segment spans residues 362–369 (DVAQDECS). A helical membrane pass occupies residues 370–390 (VIFLWTYLVASLALTVWSTIF). The Lumenal portion of the chain corresponds to 391 to 395 (LSILS).

Belongs to the auxin efflux carrier (TC 2.A.69.2) family. Expressed in seedlings, rosette and cauline leaves, stems and flowers.

Its subcellular location is the endoplasmic reticulum membrane. Functionally, involved in cellular auxin homeostasis by regulating auxin metabolism. Regulates intracellular auxin accumulation at the endoplasmic reticulum and thus auxin availability for nuclear auxin signaling. In Arabidopsis thaliana (Mouse-ear cress), this protein is Protein PIN-LIKES 7.